A 1273-amino-acid polypeptide reads, in one-letter code: Cullin-associated NEDD8-dissociated protein 2 (1273 aa).

Ser-2 carries the N-acetylserine modification. 26 HEAT repeats span residues 2 to 36, 37 to 74, 82 to 119, 121 to 157, 167 to 205, 209 to 246, 248 to 284, 292 to 329, 364 to 405, 409 to 446, 469 to 506, 554 to 591, 602 to 641, 685 to 722, 727 to 764, 768 to 807, 809 to 850, 894 to 931, 933 to 968, 970 to 1003, 1004 to 1040, 1044 to 1081, 1085 to 1121, 1142 to 1178, 1194 to 1231, and 1241 to 1273; these read STGAFYISSLLEKMTSSDKDFSPKSLGGSRVLDPL, PWLQILAAITDWISGDRTQDLALPRFMATSDLMSELQK, DSERKVVRTLLRLLEDRSGEVQNLAVKCLGPLVGKVKE, QVENIVDTLCANMRSDKEQLRDIAGIGLKTVLSELPP, SVCRKITGQLTSAIAQQEDVAVQLEALDILSDMLSRLGA, TFHASLLHCLLPQLSSPRLAVRKRTVVALGHLAAACST, LFVELADHLVDRLPGPRAPASPAAIRTLIQCLGSVGR, AHLDRLMPLVEEFCNLDDDELRESCLQAFEAFLRKCPK, TEDS…SRPD, DFHCTLAPALIRCFKEREENVKADIFGAYIMLLRHTRP, AQVPLVMKALQRQLKDRNVRTRQGCFNLFTELAGVLPG, PHLPTLLPPVMACVADPFYKVAAEALLVLQELVRTLWP, PYVGEMSTATLARLRATDLDQEVKERAISCVGHLVGHLGD, PILAEALPILASFLRKNQRALRLATLAALDALAQSQGL, PAVRSVLAELPALVSENDMHVAQLAVDFLTTVTQTQPA, EVSGPVLEELLQLLHSPLLPAGVLAATEGFLQALVGTRPP, VEYS…ALSA, GPQRELKTVLLEALGSPSEDVRAAAAYALGRVGAGNLP, FLPFLLAQIEAQPRRQYLLLHALREALGAAQPDNLK, YVEDVWALLFQRCESPEEGTRCVVAECIGKLVFV, NPPFLLPRFRKQLAAGQPYTRSTVITAVKFLISDQPH, PLLKSFIAEFMESLQDPDLNVRRATLTFFNSAVHNKPS, DLLDDILPLLYQETKIRRDLIREVEMGPFKHTVDDGL, LDICEFLNHVEDGLKDHYDIRMLTFIMLARLAALCPA, TCTAKVKAGSVKQELEKQDELKRSAMRAVAALMTNPEV, and STQIRSNPELATLFESIQKDTASGPSMDSMELS. The tract at residues 352–383 is disordered; the sequence is YNHDSDEEEQMETEDSEFSEQESEDEYSDDDD. A compositionally biased stretch (acidic residues) spans 356–383; the sequence is SDEEEQMETEDSEFSEQESEDEYSDDDD.

This sequence belongs to the CAND family. As to quaternary structure, binds TBP, CNOT3 and UBE3C. In terms of processing, ubiquitinated and targeted for proteasomal degradation. Detected in heart and skeletal muscle.

The protein localises to the nucleus. Functionally, probable assembly factor of SCF (SKP1-CUL1-F-box protein) E3 ubiquitin ligase complexes that promotes the exchange of the substrate-recognition F-box subunit in SCF complexes, thereby playing a key role in the cellular repertoire of SCF complexes. This chain is Cullin-associated NEDD8-dissociated protein 2 (Cand2), found in Rattus norvegicus (Rat).